Consider the following 135-residue polypeptide: Alpha-ketoglutarate dehydrogenase subunit 4, mitochondrial (135 aa).

It belongs to the alpha-ketoglutarate dehydrogenase component 4 family. Component of the 2-oxoglutarate dehydrogenase complex (OGDC), also called alpha-ketoglutarate dehydrogenase (KGDH) complex. The copmplex is composed of the catalytic subunits OGDH (2-oxoglutarate dehydrogenase; also called E1 subunit), DLST (dihydrolipoamide succinyltransferase; also called E2 subunit) and DLD (dihydrolipoamide dehydrogenase; also called E3 subunit), and the assembly factor KGD4. Within OGDC, interacts (via N-terminus) with E3 subunit and (via C-terminus) with the complex core formed by E1 and E2 subunits.

It is found in the mitochondrion. In terms of biological role, molecular adapter that is necessary to a form a stable 2-oxoglutarate dehydrogenase enzyme complex (OGDC). Required for incorporation of the E3 subunit into the E1-E2 core of mitochondrial OGDC, and acting as a stability factor for the fully assembled complex. This chain is Alpha-ketoglutarate dehydrogenase subunit 4, mitochondrial (KGD4), found in Chaetomium thermophilum (strain DSM 1495 / CBS 144.50 / IMI 039719) (Thermochaetoides thermophila).